A 197-amino-acid chain; its full sequence is Imidazoleglycerol-phosphate dehydratase (197 aa).

This sequence belongs to the imidazoleglycerol-phosphate dehydratase family.

It is found in the cytoplasm. It catalyses the reaction D-erythro-1-(imidazol-4-yl)glycerol 3-phosphate = 3-(imidazol-4-yl)-2-oxopropyl phosphate + H2O. The protein operates within amino-acid biosynthesis; L-histidine biosynthesis; L-histidine from 5-phospho-alpha-D-ribose 1-diphosphate: step 6/9. This chain is Imidazoleglycerol-phosphate dehydratase, found in Cellvibrio japonicus (strain Ueda107) (Pseudomonas fluorescens subsp. cellulosa).